Consider the following 284-residue polypeptide: Bifunctional protein FolD (284 aa).

Residues 164–166 (GRS) and Ser-189 each bind NADP(+).

It belongs to the tetrahydrofolate dehydrogenase/cyclohydrolase family. In terms of assembly, homodimer.

It catalyses the reaction (6R)-5,10-methylene-5,6,7,8-tetrahydrofolate + NADP(+) = (6R)-5,10-methenyltetrahydrofolate + NADPH. It carries out the reaction (6R)-5,10-methenyltetrahydrofolate + H2O = (6R)-10-formyltetrahydrofolate + H(+). The protein operates within one-carbon metabolism; tetrahydrofolate interconversion. Its function is as follows. Catalyzes the oxidation of 5,10-methylenetetrahydrofolate to 5,10-methenyltetrahydrofolate and then the hydrolysis of 5,10-methenyltetrahydrofolate to 10-formyltetrahydrofolate. The chain is Bifunctional protein FolD from Listeria monocytogenes serotype 4b (strain F2365).